Here is a 285-residue protein sequence, read N- to C-terminus: tRNA pseudouridine synthase A (285 aa).

The active-site Nucleophile is the Asp64. Substrate is bound at residue Tyr125.

The protein belongs to the tRNA pseudouridine synthase TruA family. In terms of assembly, homodimer.

It catalyses the reaction uridine(38/39/40) in tRNA = pseudouridine(38/39/40) in tRNA. Its function is as follows. Formation of pseudouridine at positions 38, 39 and 40 in the anticodon stem and loop of transfer RNAs. This chain is tRNA pseudouridine synthase A, found in Streptomyces avermitilis (strain ATCC 31267 / DSM 46492 / JCM 5070 / NBRC 14893 / NCIMB 12804 / NRRL 8165 / MA-4680).